A 246-amino-acid polypeptide reads, in one-letter code: uncharacterized protein (246 aa).

Basic residues-rich tracts occupy residues 1–10 (MVWRFQKHIG) and 79–97 (TRRRGAGQRHCNQKPKAGR). The disordered stretch occupies residues 1-184 (MVWRFQKHIG…LPPAHVPPTL (184 aa)). Over residues 158–180 (PPFPPPPPPGDPTPPSPLPPAHV) the composition is skewed to pro residues.

This is an uncharacterized protein from Homo sapiens (Human).